The following is a 776-amino-acid chain: Ribosomal biogenesis protein LAS1L (776 aa).

Residues 185–227 (DEDQLDAEDPEEEEREIIADDVLEEIPEPQDDDKDEELAVEDD) show a composition bias toward acidic residues. Residues 185 to 247 (DEDQLDAEDP…SHPEPSSRHK (63 aa)) are disordered. The span at 228–247 (ANTKGNEEVASHPEPSSRHK) shows a compositional bias: basic and acidic residues. Phosphoserine occurs at positions 425 and 509. Positions 501 to 646 (KAIEGSSSSS…DYDDDEEEDR (146 aa)) are disordered. The segment covering 544 to 557 (GNLKDVKQEEKKEN) has biased composition (basic and acidic residues). Composition is skewed to acidic residues over residues 558 to 602 (EEEE…EEEE) and 611 to 646 (MEAD…EEDR). A Phosphoserine modification is found at S658. An interaction with NOL9 region spans residues 677-696 (SAWQVSSEDVRWGTFPLGRL). The segment at 733-759 (SSTLSLCCGGSNTNSSSSSSSGNMEGL) is disordered. Over residues 741 to 755 (GGSNTNSSSSSSSGN) the composition is skewed to low complexity.

It belongs to the LAS1 family. In terms of assembly, component of some MLL1/MLL complex, at least composed of the core components KMT2A/MLL1, ASH2L, HCFC1/HCF1, WDR5 and RBBP5, as well as the facultative components BACC1, CHD8, E2F6, HSP70, INO80C, KANSL1, LAS1L, MAX, MCRS1, MGA, MYST1/MOF, PELP1, PHF20, PRP31, RING2, RUVB1/TIP49A, RUVB2/TIP49B, SENP3, TAF1, TAF4, TAF6, TAF7, TAF9 and TEX10. Component of the 5FMC complex, at least composed of PELP1, LAS1L, TEX10, WDR18 and SENP3; the complex interacts with methylated CHTOP and ZNF148. Interacts with NOL9 to form an ITS2 pre-rRNA endonuclease-kinase complex.

It is found in the nucleus. Its subcellular location is the nucleolus. The protein resides in the nucleoplasm. The protein localises to the cytoplasm. Required for the synthesis of the 60S ribosomal subunit and maturation of the 28S rRNA. Functions as a component of the Five Friends of Methylated CHTOP (5FMC) complex; the 5FMC complex is recruited to ZNF148 by methylated CHTOP, leading to desumoylation of ZNF148 and subsequent transactivation of ZNF148 target genes. Required for the efficient pre-rRNA processing at both ends of internal transcribed spacer 2 (ITS2). This is Ribosomal biogenesis protein LAS1L (Las1l) from Mus musculus (Mouse).